The chain runs to 412 residues: Putative competence-damage inducible protein (412 aa).

Belongs to the CinA family.

The protein is Putative competence-damage inducible protein of Clostridium perfringens (strain SM101 / Type A).